A 213-amino-acid polypeptide reads, in one-letter code: Charged multivesicular body protein 2b (213 aa).

At alanine 2 the chain carries N-acetylalanine. A coiled-coil region spans residues glutamine 25 to lysine 55. A disordered region spans residues methionine 178–glutamate 202. The span at alanine 179–serine 194 shows a compositional bias: low complexity. Position 199 is a phosphoserine (serine 199). The MIT-interacting motif motif lies at glutamate 201–glycine 211.

Belongs to the SNF7 family. Probable core component of the endosomal sorting required for transport complex III (ESCRT-III). ESCRT-III components are thought to multimerize to form a flat lattice on the perimeter membrane of the endosome. Several assembly forms of ESCRT-III may exist that interact and act sequentially. Interacts with CHMP2A. Interacts with VPS4A. Interacts with VPS4B; the interaction is direct.

The protein localises to the cytoplasm. The protein resides in the cytosol. It localises to the late endosome membrane. Probable core component of the endosomal sorting required for transport complex III (ESCRT-III) which is involved in multivesicular bodies (MVBs) formation and sorting of endosomal cargo proteins into MVBs. MVBs contain intraluminal vesicles (ILVs) that are generated by invagination and scission from the limiting membrane of the endosome and mostly are delivered to lysosomes enabling degradation of membrane proteins, such as stimulated growth factor receptors, lysosomal enzymes and lipids. The MVB pathway appears to require the sequential function of ESCRT-O, -I,-II and -III complexes. ESCRT-III proteins mostly dissociate from the invaginating membrane before the ILV is released. The ESCRT machinery also functions in topologically equivalent membrane fission events, such as the terminal stages of cytokinesis and the budding of enveloped viruses (lentiviruses). ESCRT-III proteins are believed to mediate the necessary vesicle extrusion and/or membrane fission activities, possibly in conjunction with the AAA ATPase VPS4. The chain is Charged multivesicular body protein 2b (CHMP2B) from Bos taurus (Bovine).